A 387-amino-acid chain; its full sequence is MPNEFTSAKLRSDCSRTSLQWYTQTQHKMRRPSLLLKDILKCMLVVFGVWLLYILKLNYTAEECDMKKLNYVDPARIKRAHRNTQEVFQKECRPGHAKKTMDLLFKGKYSMDLEPFVQKIPTASEAELKYDPPFGFRKFSSKVQSLLDMLPEHDFPEHLRAKHCKRCVVIGNGGILHGLELGHALNQFDVVIRLNSAPIEGYSEHVGNKTTIRMTYPEGAPLSDAEYYANDLFVAVLFKSVDFKWLQAMVKNESLPFWIRLFFWKQVAEKIPLQPKHFRILNPVIIKETAFDILQYSEPQSRFWGHDKNIPTIGIIAIVLATHLCDEVSLAGFGYDLSQPRTPLHYFDSQCMGAMNWQVMHNVTTETQFLQKLIKEGVVQDLSGGIH.

Residues 1–33 (MPNEFTSAKLRSDCSRTSLQWYTQTQHKMRRPS) are Cytoplasmic-facing. The chain crosses the membrane as a helical; Signal-anchor for type II membrane protein span at residues 34–54 (LLLKDILKCMLVVFGVWLLYI). The Extracellular portion of the chain corresponds to 55–387 (LKLNYTAEEC…VVQDLSGGIH (333 aa)). Residues Asn58 and Asn208 are each glycosylated (N-linked (GlcNAc...) asparagine). Cysteines 167 and 325 form a disulfide.

The protein belongs to the glycosyltransferase 29 family.

The protein resides in the golgi apparatus membrane. It carries out the reaction a beta-D-Gal-(1-&gt;4)-beta-D-Glc-(1&lt;-&gt;1)-Cer(d18:1(4E)) + CMP-N-acetyl-beta-neuraminate = a ganglioside GM3 (d18:1(4E)) + CMP + H(+). It catalyses the reaction ganglioside GA2 (d18:1(4E)/18:0) + CMP-N-acetyl-beta-neuraminate = ganglioside GM2 (d18:1(4E)/18:0) + CMP + H(+). The catalysed reaction is a beta-D-Gal-(1&lt;-&gt;1')-ceramide + CMP-N-acetyl-beta-neuraminate = N-acetyl-alpha-neuraminosyl-(2-&gt;3)-beta-D-galactosyl-(1&lt;-&gt;1')-ceramide + CMP + H(+). The enzyme catalyses ganglioside GA1 (d18:1(4E)/18:0) + CMP-N-acetyl-beta-neuraminate = ganglioside GM1 (d18:1(4E)/18:0) + CMP + H(+). Its function is as follows. Transfers the sialyl group (N-acetyl-alpha-neuraminyl or NeuAc) from CMP-NeuAc to the non-reducing terminal galactose (Gal) of glycosphingolipids forming gangliosides (important molecules involved in the regulation of multiple cellular processes, including cell proliferation and differentiation, apoptosis, embryogenesis, development, and oncogenesis). Mainly involved in the biosynthesis of ganglioside GM3 but can also use different glycolipids as substrate acceptors such as D-galactosylceramide (GalCer), asialo-GM2 (GA2) and asialo-GM1 (GA1), although less preferentially than beta-D-Gal-(1-&gt;4)-beta-D-Glc-(1&lt;-&gt;1)-Cer (LacCer). The chain is Lactosylceramide alpha-2,3-sialyltransferase (St3gal5) from Rattus norvegicus (Rat).